The sequence spans 138 residues: Large ribosomal subunit protein uL16 (138 aa).

Over residues 1–13 (MLQPSRRKYRKEQ) the composition is skewed to basic residues. Residues 1 to 24 (MLQPSRRKYRKEQKGRNTGLASRG) are disordered.

This sequence belongs to the universal ribosomal protein uL16 family. Part of the 50S ribosomal subunit.

Binds 23S rRNA and is also seen to make contacts with the A and possibly P site tRNAs. This is Large ribosomal subunit protein uL16 from Bordetella bronchiseptica (strain ATCC BAA-588 / NCTC 13252 / RB50) (Alcaligenes bronchisepticus).